Here is a 159-residue protein sequence, read N- to C-terminus: UPF0303 protein Ping_1243 (159 aa).

Belongs to the UPF0303 family.

This is UPF0303 protein Ping_1243 from Psychromonas ingrahamii (strain DSM 17664 / CCUG 51855 / 37).